The chain runs to 208 residues: N-(5'-phosphoribosyl)anthranilate isomerase (208 aa).

This sequence belongs to the TrpF family.

It catalyses the reaction N-(5-phospho-beta-D-ribosyl)anthranilate = 1-(2-carboxyphenylamino)-1-deoxy-D-ribulose 5-phosphate. It functions in the pathway amino-acid biosynthesis; L-tryptophan biosynthesis; L-tryptophan from chorismate: step 3/5. The chain is N-(5'-phosphoribosyl)anthranilate isomerase from Deinococcus radiodurans (strain ATCC 13939 / DSM 20539 / JCM 16871 / CCUG 27074 / LMG 4051 / NBRC 15346 / NCIMB 9279 / VKM B-1422 / R1).